We begin with the raw amino-acid sequence, 88 residues long: Probable Fe(2+)-trafficking protein (88 aa).

This sequence belongs to the Fe(2+)-trafficking protein family.

Functionally, could be a mediator in iron transactions between iron acquisition and iron-requiring processes, such as synthesis and/or repair of Fe-S clusters in biosynthetic enzymes. In Alkalilimnicola ehrlichii (strain ATCC BAA-1101 / DSM 17681 / MLHE-1), this protein is Probable Fe(2+)-trafficking protein.